Consider the following 897-residue polypeptide: Zinc finger protein zas1 (897 aa).

2 C2H2-type zinc fingers span residues 26–50 (FYCT…ERTH) and 56–79 (FSCS…QQMH). Residues 93–119 (ASCFLGFCVLAHDYVNLINARHFMIEH) form a C2H2-type 3; atypical zinc finger.

It is found in the nucleus. The sequence is that of Zinc finger protein zas1 (zas1) from Schizosaccharomyces pombe (strain 972 / ATCC 24843) (Fission yeast).